The following is a 165-amino-acid chain: uncharacterized protein (165 aa).

The helical transmembrane segment at A16–V36 threads the bilayer.

The protein belongs to the asfivirus F165R family.

Its subcellular location is the host membrane. This is an uncharacterized protein from African swine fever virus (isolate Tick/Malawi/Lil 20-1/1983) (ASFV).